The chain runs to 377 residues: 23S rRNA (uracil(747)-C(5))-methyltransferase RlmC (377 aa).

Positions 3, 11, 14, and 87 each coordinate [4Fe-4S] cluster. Positions 212, 241, 262, and 307 each coordinate S-adenosyl-L-methionine. The Nucleophile role is filled by Cys-334.

The protein belongs to the class I-like SAM-binding methyltransferase superfamily. RNA M5U methyltransferase family. RlmC subfamily.

The enzyme catalyses uridine(747) in 23S rRNA + S-adenosyl-L-methionine = 5-methyluridine(747) in 23S rRNA + S-adenosyl-L-homocysteine + H(+). Functionally, catalyzes the formation of 5-methyl-uridine at position 747 (m5U747) in 23S rRNA. In Edwardsiella ictaluri (strain 93-146), this protein is 23S rRNA (uracil(747)-C(5))-methyltransferase RlmC.